The sequence spans 560 residues: Serine/threonine-protein kinase TOS3 (560 aa).

In terms of domain architecture, Protein kinase spans 50-344 (FEILATLGNG…LADIKVHPFM (295 aa)). ATP contacts are provided by residues 56-64 (LGNGQYGKV) and K79. The active-site Proton acceptor is the D189.

Belongs to the protein kinase superfamily. Ser/Thr protein kinase family. Post-translationally, autophosphorylated.

The catalysed reaction is L-seryl-[protein] + ATP = O-phospho-L-seryl-[protein] + ADP + H(+). The enzyme catalyses L-threonyl-[protein] + ATP = O-phospho-L-threonyl-[protein] + ADP + H(+). Its function is as follows. One of the three SNF1 protein kinases (with SAK1 and ELM1) which are required for growth on nonfermentable carbon sources and nonpreferred sugars and for response to environmental stress. Activates SNF1 by phosphorylation of its activation-loop 'Thr-210'. Required for the regulation by SNF1 of the transcription of a large set of genes, the modification the activity of metabolic enzymes, and the control of various nutrient-responsive cellular developmental processes. Also phosphorylates GAL83, MIG1 and SIP2. The polypeptide is Serine/threonine-protein kinase TOS3 (TOS3) (Saccharomyces cerevisiae (strain ATCC 204508 / S288c) (Baker's yeast)).